Reading from the N-terminus, the 92-residue chain is Mediator-associated protein 3 (92 aa).

The 58-residue stretch at K13–E70 folds into the DEK-C domain.

As to quaternary structure, associated with the Mediator complex.

The protein resides in the nucleus. The polypeptide is Mediator-associated protein 3 (Arabidopsis thaliana (Mouse-ear cress)).